The following is a 1873-amino-acid chain: Voltage-dependent L-type calcium channel subunit alpha-1S (1873 aa).

The tract at residues 1-23 (MEPSSPQDEGLRKKQPKKPVPEI) is disordered. Over 1–51 (MEPSSPQDEGLRKKQPKKPVPEILPRPPRALFCLTLENPLRKACISIVEWK) the chain is Cytoplasmic. An I repeat occupies 38-337 (NPLRKACISI…LVLGVLSGEF (300 aa)). Residues 52-70 (PFETIILLTIFANCVALAV) traverse the membrane as a helical segment. At 71 to 85 (YLPMPEDDNNSLNLG) the chain is on the extracellular side. A glycan (N-linked (GlcNAc...) asparagine) is linked at Asn79. Residues 86–106 (LEKLEYFFLIVFSIEAAMKII) form a helical membrane-spanning segment. At 107-115 (AYGFLFHQD) the chain is on the cytoplasmic side. A helical membrane pass occupies residues 116 to 136 (AYLRSGWNVLDFTIVFLGVFT). The Extracellular portion of the chain corresponds to 137–160 (VILEQVNVIQSHTAPMSSKGAGLD). A helical membrane pass occupies residues 161 to 179 (VKALRAFRVLRPLRLVSGV). Over 180-196 (PSLQVVLNSIFKAMLPL) the chain is Cytoplasmic. The helical transmembrane segment at 197-218 (FHIALLVLFMVIIYAIIGLELF) threads the bilayer. Over 219 to 279 (KGKMHKTCYF…HGITHFDNFG (61 aa)) the chain is Extracellular. Cystine bridges form between Cys226–Cys254 and Cys245–Cys261. A glycan (N-linked (GlcNAc...) asparagine) is linked at Asn257. The segment at residues 280-301 (FSMLTVYQCITMEGWTDVLYWV) is an intramembrane region (pore-forming). Positions 290-293 (TMEG) match the Selectivity filter of repeat I motif. Glu292 is a binding site for Ca(2+). Topologically, residues 302–309 (NDAIGNEW) are extracellular. Residues 310-330 (PWIYFVTLILLGSFFILNLVL) traverse the membrane as a helical segment. Residues 331 to 432 (GVLSGEFTKE…WKCHDIVKSK (102 aa)) are Cytoplasmic-facing. The binding to the beta subunit stretch occupies residues 357-374 (QQLDEDLRGYMSWITQGE). Phosphoserine occurs at positions 393 and 397. An II repeat occupies 418-664 (NRIFRWKCHD…VFLAIAVDNL (247 aa)). A helical transmembrane segment spans residues 433–451 (VFYWLVILIVALNTLSIAS). Residues 452–462 (EHHNQPLWLTR) lie on the Extracellular side of the membrane. The chain crosses the membrane as a helical span at residues 463–483 (LQDIANRVLLSLFTTEMLMKM). At 484–494 (YGLGLRQYFMS) the chain is on the cytoplasmic side. Residues 495-514 (IFNRFDCFVVCSGILEILLV) form a helical membrane-spanning segment. Topologically, residues 515–523 (ESGAMTPLG) are extracellular. The helical transmembrane segment at 524–542 (ISVLRCIRLLRIFKITKYW) threads the bilayer. Topologically, residues 543-561 (TSLSNLVASLLNSIRSIAS) are cytoplasmic. A helical membrane pass occupies residues 562 to 581 (LLLLLFLFIVIFALLGMQLF). Over 582 to 601 (GGRYDFEDTEVRRSNFDNFP) the chain is Extracellular. Residues 602 to 623 (QALISVFQVLTGEDWTSMMYNG) constitute an intramembrane region (pore-forming). The Selectivity filter of repeat II motif lies at 612 to 615 (TGED). Glu614 provides a ligand contact to Ca(2+). Residues 624–633 (IMAYGGPSYP) are Extracellular-facing. Residues 634-653 (GMLVCIYFIILFVCGNYILL) form a helical membrane-spanning segment. The Cytoplasmic segment spans residues 654-799 (NVFLAIAVDN…VLCHRIVNAT (146 aa)). Disordered regions lie at residues 675-717 (KAKA…IPTT) and 731-757 (EVKD…LSPR). Ser687 is subject to Phosphoserine; by PKA. The span at 690 to 711 (LPDKSEEEKSTMAKKLEQKPKG) shows a compositional bias: basic and acidic residues. Positions 742–751 (PGDDEEDEPE) are enriched in acidic residues. Positions 747–760 (EDEPEIPLSPRPRP) are interaction with STAC, STAC2 and STAC3 (via SH3 domains). The III repeat unit spans residues 786-1068 (NKIRVLCHRI…IFVGFVIVTF (283 aa)). Residues 800–818 (WFTNFILLFILLSSAALAA) form a helical membrane-spanning segment. The Extracellular segment spans residues 819–830 (EDPIRADSMRNQ). Residues 831-850 (ILKHFDIGFTSVFTVEIVLK) traverse the membrane as a helical segment. Residues 851-866 (MTTYGAFLHKGSFCRN) lie on the Cytoplasmic side of the membrane. The chain crosses the membrane as a helical span at residues 867 to 885 (YFNMLDLLVVAVSLISMGL). The Extracellular portion of the chain corresponds to 886–892 (ESSAISV). Residues 893–911 (VKILRVLRVLRPLRAINRA) traverse the membrane as a helical segment. Topologically, residues 912 to 930 (KGLKHVVQCMFVAISTIGN) are cytoplasmic. Residues 931–950 (IVLVTTLLQFMFACIGVQLF) form a helical membrane-spanning segment. Residues 951-1000 (KGKFFRCTDLSKMTEEECRGYYYVYKDGDPMQIELRHREWVHSDFHFDNV) are Extracellular-facing. An intrachain disulfide couples Cys957 to Cys968. The segment at 988-1077 (REWVHSDFHF…FQEQGETEYK (90 aa)) is dihydropyridine binding. The segment at residues 1001–1021 (LSAMMSLFTVSTFEGWPQLLY) is an intramembrane region (pore-forming). The short motif at 1012 to 1015 (TFEG) is the Selectivity filter of repeat III element. Residue Glu1014 coordinates Ca(2+). Residues 1022 to 1038 (KAIDSNAEDVGPIYNNR) lie on the Extracellular side of the membrane. A helical membrane pass occupies residues 1039–1060 (VEMAIFFIIYIILIAFFMMNIF). The Cytoplasmic portion of the chain corresponds to 1061–1118 (VGFVIVTFQEQGETEYKNCELDKNQRQCVQYALKARPLRCYIPKNPYQYQVWYIVTSS). Residues 1105–1384 (NPYQYQVWYI…LFVAVIMDNF (280 aa)) form an IV repeat. A helical membrane pass occupies residues 1119–1140 (YFEYLMFALIMLNTICLGMQHY). Asn1141 carries N-linked (GlcNAc...) asparagine glycosylation. Topologically, residues 1141–1148 (NQSEQMNH) are extracellular. The helical transmembrane segment at 1149–1170 (ISDILNVAFTIIFTLEMILKLM) threads the bilayer. Topologically, residues 1171 to 1180 (AFKARGYFGD) are cytoplasmic. The chain crosses the membrane as a helical span at residues 1181 to 1200 (PWNVFDFLIVIGSIIDVILS). Topologically, residues 1201–1231 (EIDTFLASSGGLYCLGGGCGNVDPDESARIS) are extracellular. The chain crosses the membrane as a helical span at residues 1232-1250 (SAFFRLFRVMRLIKLLSRA). The Cytoplasmic portion of the chain corresponds to 1251 to 1268 (EGVRTLLWTFIKSFQALP). The helical transmembrane segment at 1269–1289 (YVALLIVMLFFIYAVIGMQMF) threads the bilayer. Residues 1290–1311 (GKIALVDGTQINRNNNFQTFPQ) lie on the Extracellular side of the membrane. Positions 1312-1330 (AVLLLFRCATGEAWQEILL) form an intramembrane region, pore-forming. The short motif at 1321–1324 (TGEA) is the Selectivity filter of repeat IV element. Over 1331–1356 (ACSYGKLCDPESDYAPGEEYTCGTNF) the chain is Extracellular. The dihydropyridine binding stretch occupies residues 1337 to 1403 (LCDPESDYAP…LGPHHLDEFK (67 aa)). Cysteines 1338 and 1352 form a disulfide. The segment at 1349 to 1391 (EYTCGTNFAYYYFISFYMLCAFLVINLFVAVIMDNFDYLTRDW) is phenylalkylamine binding. A helical membrane pass occupies residues 1357–1381 (AYYYFISFYMLCAFLVINLFVAVIM). Over 1382-1873 (DNFDYLTRDW…SQETLIPPRL (492 aa)) the chain is Cytoplasmic. The interval 1522–1542 (KFYATFLIQEHFRKFMKRQEE) is interaction with calmodulin. Ser1575 carries the phosphoserine; by PKA and CAMK2 modification. Position 1617 is a phosphoserine; by PKA (Ser1617). The disordered stretch occupies residues 1731–1780 (MPRGQAPPAPCQCPRVESSMPEDRKSSTPGSLHEETPHSRSTRENTSRCS). The segment covering 1751 to 1776 (PEDRKSSTPGSLHEETPHSRSTRENT) has biased composition (basic and acidic residues).

Belongs to the calcium channel alpha-1 subunit (TC 1.A.1.11) family. CACNA1S subfamily. As to quaternary structure, component of a calcium channel complex consisting of a pore-forming alpha subunit (CACNA1S) and the ancillary subunits CACNB1 or CACNB2, CACNG1 and CACNA2D1. The channel complex contains alpha, beta, gamma and delta subunits in a 1:1:1:1 ratio, i.e. it contains either CACNB1 or CACNB2. CACNA1S channel activity is modulated by the auxiliary subunits (CACNB1 or CACNB2, CACNG1 and CACNA2D1). Interacts with DYSF and JSRP1. Interacts with RYR1. Interacts with STAC, STAC2 and STAC3 (via their SH3 domains). Interacts with CALM. The alpha-1S subunit is found in two isoforms in the skeletal muscle: a minor form of 212 kDa containing the complete amino acid sequence, and a major form of 190 kDa derived from the full-length form by post-translational proteolysis close to Phe-1690. In terms of processing, phosphorylated. Phosphorylation by PKA activates the calcium channel. Both the minor and major forms are phosphorylated in vitro by PKA. Phosphorylation at Ser-1575 is involved in beta-adrenergic-mediated regulation of the channel. Skeletal muscle specific.

Its subcellular location is the cell membrane. It localises to the sarcolemma. The protein localises to the T-tubule. The catalysed reaction is Ca(2+)(in) = Ca(2+)(out). Channel activity is blocked by dihydropyridines (DHP), phenylalkylamines, and by benzothiazepines. In terms of biological role, pore-forming, alpha-1S subunit of the voltage-gated calcium channel that gives rise to L-type calcium currents in skeletal muscle. Calcium channels containing the alpha-1S subunit play an important role in excitation-contraction coupling in skeletal muscle via their interaction with RYR1, which triggers Ca(2+) release from the sarcoplasmic reticulum and ultimately results in muscle contraction. Long-lasting (L-type) calcium channels belong to the 'high-voltage activated' (HVA) group. The sequence is that of Voltage-dependent L-type calcium channel subunit alpha-1S (CACNA1S) from Homo sapiens (Human).